Consider the following 156-residue polypeptide: Small ribosomal subunit protein uS7 (156 aa).

The protein belongs to the universal ribosomal protein uS7 family. Part of the 30S ribosomal subunit. Contacts proteins S9 and S11.

Its function is as follows. One of the primary rRNA binding proteins, it binds directly to 16S rRNA where it nucleates assembly of the head domain of the 30S subunit. Is located at the subunit interface close to the decoding center, probably blocks exit of the E-site tRNA. This chain is Small ribosomal subunit protein uS7, found in Clostridium beijerinckii (strain ATCC 51743 / NCIMB 8052) (Clostridium acetobutylicum).